The primary structure comprises 263 residues: ATP synthase subunit delta (263 aa).

The protein belongs to the ATPase delta chain family. F-type ATPases have 2 components, F(1) - the catalytic core - and F(0) - the membrane proton channel. F(1) has five subunits: alpha(3), beta(3), gamma(1), delta(1), epsilon(1). F(0) has three main subunits: a(1), b(2) and c(10-14). The alpha and beta chains form an alternating ring which encloses part of the gamma chain. F(1) is attached to F(0) by a central stalk formed by the gamma and epsilon chains, while a peripheral stalk is formed by the delta and b chains.

The protein localises to the cell membrane. F(1)F(0) ATP synthase produces ATP from ADP in the presence of a proton or sodium gradient. F-type ATPases consist of two structural domains, F(1) containing the extramembraneous catalytic core and F(0) containing the membrane proton channel, linked together by a central stalk and a peripheral stalk. During catalysis, ATP synthesis in the catalytic domain of F(1) is coupled via a rotary mechanism of the central stalk subunits to proton translocation. Its function is as follows. This protein is part of the stalk that links CF(0) to CF(1). It either transmits conformational changes from CF(0) to CF(1) or is implicated in proton conduction. This chain is ATP synthase subunit delta, found in Cutibacterium acnes (strain DSM 16379 / KPA171202) (Propionibacterium acnes).